Reading from the N-terminus, the 127-residue chain is Histone H2B type 1-A (127 aa).

Positions 1-36 are disordered; sequence MPEVSSKGATISKKGFKKAVVKTQKKEGKKRKRTRK. Pro-2 bears the N-acetylproline mark. Lys-7, Lys-13, Lys-14, Lys-17, Lys-18, Lys-22, and Lys-25 each carry N6-acetyllysine; alternate. Lys-7, Lys-13, Lys-14, Lys-17, Lys-18, Lys-22, Lys-25, and Lys-36 each carry N6-crotonyllysine; alternate. An N6-lactoyllysine; alternate mark is found at Lys-7 and Lys-13. Lys-7 participates in a covalent cross-link: Glycyl lysine isopeptide (Lys-Gly) (interchain with G-Cter in SUMO2); alternate. 4 positions are modified to N6-lactoyllysine; alternate: Lys-17, Lys-18, Lys-22, and Lys-25. Lys-22 participates in a covalent cross-link: Glycyl lysine isopeptide (Lys-Gly) (interchain with G-Cter in SUMO2); alternate. Lys-36 is modified (N6-succinyllysine; alternate). A Glycyl lysine isopeptide (Lys-Gly) (interchain with G-Cter in ubiquitin); alternate cross-link involves residue Lys-36. At Ser-38 the chain carries Phosphoserine. At Lys-45 the chain carries N6-lactoyllysine; alternate. The residue at position 48 (Lys-48) is an N6-methyllysine. The residue at position 59 (Lys-59) is an N6,N6-dimethyllysine. Dimethylated arginine is present on Arg-81. Ser-86 carries the post-translational modification Phosphoserine. The residue at position 87 (Lys-87) is an N6-acetyllysine; alternate. At Lys-87 the chain carries N6-lactoyllysine; alternate. At Lys-87 the chain carries N6,N6,N6-trimethyllysine; alternate. Omega-N-methylarginine is present on residues Arg-88 and Arg-94. At Lys-110 the chain carries N6-lactoyllysine; alternate. Lys-110 carries the post-translational modification N6-methyllysine. At Thr-117 the chain carries Phosphothreonine. An N6-lactoyllysine; alternate mark is found at Lys-118 and Lys-122. Lys-118 and Lys-122 each carry N6-succinyllysine; alternate. N6-methylated lysine; alternate is present on Lys-118. Lys-122 is covalently cross-linked (Glycyl lysine isopeptide (Lys-Gly) (interchain with G-Cter in ubiquitin); alternate).

Belongs to the histone H2B family. As to quaternary structure, the nucleosome is a histone octamer containing two molecules each of H2A, H2B, H3 and H4 assembled in one H3-H4 heterotetramer and two H2A-H2B heterodimers. Monoubiquitination at Lys-36 (H2BK34Ub) by the MSL1/MSL2 dimer is required for histone H3 'Lys-4' (H3K4me) and 'Lys-79' (H3K79me) methylation and transcription activation at specific gene loci, such as HOXA9 and MEIS1 loci. Similarly, monoubiquitination at Lys-122 (H2BK120Ub) by the RNF20/40 complex gives a specific tag for epigenetic transcriptional activation and is also prerequisite for histone H3 'Lys-4' and 'Lys-79' methylation. It also functions cooperatively with the FACT dimer to stimulate elongation by RNA polymerase II. H2BK120Ub also acts as a regulator of mRNA splicing: deubiquitination by USP49 is required for efficient cotranscriptional splicing of a large set of exons. In terms of processing, crotonylation (Kcr) is specifically present in male germ cells and marks testis-specific genes in post-meiotic cells, including X-linked genes that escape sex chromosome inactivation in haploid cells. Crotonylation marks active promoters and enhancers and confers resistance to transcriptional repressors. It is also associated with post-meiotically activated genes on autosomes. Post-translationally, acetylated during spermatogenesis. Acetylated form is most abundant in spermatogonia compared to spermatocytes and round spermatids. Phosphorylated at Thr-117 in spermatogonia, spermatocytes and round spermatids. In terms of processing, methylated at Lys-118 in spermatogonia, spermatocytes and round spermatids. Post-translationally, lactylated in macrophages by EP300/P300 by using lactoyl-CoA directly derived from endogenous or exogenous lactate, leading to stimulates gene transcription. Mainly expressed in testis, and the corresponding protein is also present in mature sperm (at protein level). Also found in some fat cells.

The protein resides in the nucleus. It is found in the chromosome. In terms of biological role, variant histone specifically required to direct the transformation of dissociating nucleosomes to protamine in male germ cells. Entirely replaces classical histone H2B prior nucleosome to protamine transition and probably acts as a nucleosome dissociating factor that creates a more dynamic chromatin, facilitating the large-scale exchange of histones. Core component of nucleosome. Nucleosomes wrap and compact DNA into chromatin, limiting DNA accessibility to the cellular machineries which require DNA as a template. Histones thereby play a central role in transcription regulation, DNA repair, DNA replication and chromosomal stability. DNA accessibility is regulated via a complex set of post-translational modifications of histones, also called histone code, and nucleosome remodeling. Also found in fat cells, its function and the presence of post-translational modifications specific to such cells are still unclear. This is Histone H2B type 1-A from Homo sapiens (Human).